A 123-amino-acid polypeptide reads, in one-letter code: MNGRIAVAIALGGALGALARFYISGILPVYKDFPVGTLLVNSIASFILGYIYGLLFWGIDVPADWRAFFGTGFCGALSTFSTFSYETFSLLREREYFLAALNISANVIITVSLVFIGFILARR.

Helical transmembrane passes span 7-27 (VAIA…SGIL), 39-59 (LVNS…FWGI), 68-88 (FFGT…YETF), and 100-120 (ALNI…GFIL). Na(+) contacts are provided by glycine 75 and serine 78.

This sequence belongs to the fluoride channel Fluc/FEX (TC 1.A.43) family.

The protein localises to the cell membrane. It carries out the reaction fluoride(in) = fluoride(out). With respect to regulation, na(+) is not transported, but it plays an essential structural role and its presence is essential for fluoride channel function. Its function is as follows. Fluoride-specific ion channel. Important for reducing fluoride concentration in the cell, thus reducing its toxicity. This chain is Fluoride-specific ion channel FluC, found in Thermococcus onnurineus (strain NA1).